A 341-amino-acid chain; its full sequence is Aspartate carbamoyltransferase catalytic subunit (341 aa).

2 residues coordinate carbamoyl phosphate: Arg-89 and Thr-90. L-aspartate is bound at residue Lys-117. Residues Arg-139, His-169, and Gln-172 each coordinate carbamoyl phosphate. Positions 202 and 257 each coordinate L-aspartate. 2 residues coordinate carbamoyl phosphate: Gly-298 and Pro-299.

Belongs to the aspartate/ornithine carbamoyltransferase superfamily. ATCase family. Heterododecamer (2C3:3R2) of six catalytic PyrB chains organized as two trimers (C3), and six regulatory PyrI chains organized as three dimers (R2).

It catalyses the reaction carbamoyl phosphate + L-aspartate = N-carbamoyl-L-aspartate + phosphate + H(+). Its pathway is pyrimidine metabolism; UMP biosynthesis via de novo pathway; (S)-dihydroorotate from bicarbonate: step 2/3. In terms of biological role, catalyzes the condensation of carbamoyl phosphate and aspartate to form carbamoyl aspartate and inorganic phosphate, the committed step in the de novo pyrimidine nucleotide biosynthesis pathway. The chain is Aspartate carbamoyltransferase catalytic subunit from Paraburkholderia phytofirmans (strain DSM 17436 / LMG 22146 / PsJN) (Burkholderia phytofirmans).